The chain runs to 157 residues: Xanthine-guanine phosphoribosyltransferase (157 aa).

Residues 42–43 and 93–101 contribute to the 5-phospho-alpha-D-ribose 1-diphosphate site; these read RG and DDLVDTGNT. A Mg(2+)-binding site is contributed by Asp-94. Guanine is bound by residues Asp-97 and Ile-140. 2 residues coordinate xanthine: Asp-97 and Ile-140. GMP contacts are provided by residues 97–101 and 139–140; these read DTGNT and WI.

This sequence belongs to the purine/pyrimidine phosphoribosyltransferase family. XGPT subfamily. Homotetramer. The cofactor is Mg(2+).

The protein localises to the cell inner membrane. It carries out the reaction GMP + diphosphate = guanine + 5-phospho-alpha-D-ribose 1-diphosphate. It catalyses the reaction XMP + diphosphate = xanthine + 5-phospho-alpha-D-ribose 1-diphosphate. The catalysed reaction is IMP + diphosphate = hypoxanthine + 5-phospho-alpha-D-ribose 1-diphosphate. Its pathway is purine metabolism; GMP biosynthesis via salvage pathway; GMP from guanine: step 1/1. The protein operates within purine metabolism; XMP biosynthesis via salvage pathway; XMP from xanthine: step 1/1. Functionally, purine salvage pathway enzyme that catalyzes the transfer of the ribosyl-5-phosphate group from 5-phospho-alpha-D-ribose 1-diphosphate (PRPP) to the N9 position of the 6-oxopurines guanine and xanthine to form the corresponding ribonucleotides GMP (guanosine 5'-monophosphate) and XMP (xanthosine 5'-monophosphate), with the release of PPi. To a lesser extent, also acts on hypoxanthine. The sequence is that of Xanthine-guanine phosphoribosyltransferase from Actinobacillus pleuropneumoniae serotype 5b (strain L20).